The sequence spans 1030 residues: Zinc finger and SCAN domain-containing protein 20 (1030 aa).

The disordered stretch occupies residues 22-42; it reads DSWGSDSRPEKESHSPVPGPE. In terms of domain architecture, SCAN box spans 45 to 127; the sequence is RRCFRQFRYR…ALVEDWHREA (83 aa). 4 disordered regions span residues 178–201, 213–285, 411–441, and 578–600; these read DLSKMPPESLKESAVLTPQAPTVP, GKSQ…DSAQ, SGGPGEAVALPRLGDSDTEMDDQDEGSWEPE, and TGLPGSGQSSTEADDQEAWGEME. The span at 225–240 shows a compositional bias: basic and acidic residues; the sequence is AKKEPCQDPAGGDRGD. Composition is skewed to acidic residues over residues 426 to 441 and 589 to 600; these read SDTEMDDQDEGSWEPE and EADDQEAWGEME. The C2H2-type 1; degenerate zinc-finger motif lies at 697 to 719; the sequence is YGCDTRAKSFSRKVHFFAPQRTH. The C2H2-type 2; degenerate zinc finger occupies 725–747; that stretch reads YKCLGSGKSFSDRANLSTHQRIH. C2H2-type zinc fingers lie at residues 753–775 and 781–803; these read YRCLECGKSFNDPSNLITHQRTH and YKCGLCWKSFNQSSNLLKHQRVH. 2 disordered regions span residues 801 to 820 and 828 to 850; these read RVHLGGPPNQRDEPGENFGQ and WRRNSTQEGPKEPQNISMGADSP. 6 C2H2-type zinc fingers span residues 862–884, 890–912, 918–940, 946–968, 974–996, and 1002–1024; these read YSCPECGRCFSKSSALTSHQRIH, YECAVCGKSFSKSSSLANHRRTH, HKCADCGKCFSERSKLITHQRVH, YECPECGKFFRDRSNLITHQRIH, YKCRECGKCFNQSSSLIIHQRIH, and YKCTECGKDFNNSSHFSAHRRTH.

This sequence belongs to the krueppel C2H2-type zinc-finger protein family.

The protein localises to the nucleus. In terms of biological role, may be involved in transcriptional regulation. The sequence is that of Zinc finger and SCAN domain-containing protein 20 (Zscan20) from Mus musculus (Mouse).